The sequence spans 444 residues: Phosphoglucosamine mutase (444 aa).

Residue Ser102 is the Phosphoserine intermediate of the active site. Residues Ser102, Asp239, Asp241, and Asp243 each contribute to the Mg(2+) site. A Phosphoserine modification is found at Ser102.

This sequence belongs to the phosphohexose mutase family. Requires Mg(2+) as cofactor. In terms of processing, activated by phosphorylation.

It carries out the reaction alpha-D-glucosamine 1-phosphate = D-glucosamine 6-phosphate. Catalyzes the conversion of glucosamine-6-phosphate to glucosamine-1-phosphate. This chain is Phosphoglucosamine mutase, found in Saccharopolyspora erythraea (strain ATCC 11635 / DSM 40517 / JCM 4748 / NBRC 13426 / NCIMB 8594 / NRRL 2338).